Consider the following 394-residue polypeptide: uncharacterized protein (394 aa).

2 helical membrane-spanning segments follow: residues 31–51 (LAIL…LSGL) and 57–77 (LIIA…SLLI).

It belongs to the chlamydial CPn_0129/CT_036/TC_0306 family.

The protein resides in the cell membrane. This is an uncharacterized protein from Chlamydia pneumoniae (Chlamydophila pneumoniae).